The primary structure comprises 407 residues: tRNA(Ile)-lysidine synthase (407 aa).

Serine 36–serine 41 provides a ligand contact to ATP.

The protein belongs to the tRNA(Ile)-lysidine synthase family.

It is found in the cytoplasm. It catalyses the reaction cytidine(34) in tRNA(Ile2) + L-lysine + ATP = lysidine(34) in tRNA(Ile2) + AMP + diphosphate + H(+). Functionally, ligates lysine onto the cytidine present at position 34 of the AUA codon-specific tRNA(Ile) that contains the anticodon CAU, in an ATP-dependent manner. Cytidine is converted to lysidine, thus changing the amino acid specificity of the tRNA from methionine to isoleucine. This is tRNA(Ile)-lysidine synthase from Tropheryma whipplei (strain TW08/27) (Whipple's bacillus).